A 199-amino-acid chain; its full sequence is dITP/XTP pyrophosphatase (199 aa).

8 to 13 (TSNINK) contributes to the substrate binding site. The active-site Proton acceptor is the Asp-68. A Mg(2+)-binding site is contributed by Asp-68. Residues Ser-69, 155 to 158 (FGYN), Lys-177, and 182 to 183 (HR) contribute to the substrate site.

It belongs to the HAM1 NTPase family. In terms of assembly, homodimer. Requires Mg(2+) as cofactor.

It carries out the reaction XTP + H2O = XMP + diphosphate + H(+). The enzyme catalyses dITP + H2O = dIMP + diphosphate + H(+). It catalyses the reaction ITP + H2O = IMP + diphosphate + H(+). Functionally, pyrophosphatase that catalyzes the hydrolysis of nucleoside triphosphates to their monophosphate derivatives, with a high preference for the non-canonical purine nucleotides XTP (xanthosine triphosphate), dITP (deoxyinosine triphosphate) and ITP. Seems to function as a house-cleaning enzyme that removes non-canonical purine nucleotides from the nucleotide pool, thus preventing their incorporation into DNA/RNA and avoiding chromosomal lesions. This Borrelia recurrentis (strain A1) protein is dITP/XTP pyrophosphatase.